The following is a 332-amino-acid chain: Fructose-1,6-bisphosphatase class 1 (332 aa).

Residues Glu94, Asp116, Leu118, and Asp119 each contribute to the Mg(2+) site. Residues 119-122 (DGSS), Asn211, Tyr239, 257-259 (YLY), and Lys269 each bind substrate. Mg(2+) is bound at residue Glu275.

It belongs to the FBPase class 1 family. In terms of assembly, homotetramer. Mg(2+) is required as a cofactor.

The protein resides in the cytoplasm. It catalyses the reaction beta-D-fructose 1,6-bisphosphate + H2O = beta-D-fructose 6-phosphate + phosphate. It participates in carbohydrate biosynthesis; Calvin cycle. The sequence is that of Fructose-1,6-bisphosphatase class 1 from Synechococcus sp. (strain JA-3-3Ab) (Cyanobacteria bacterium Yellowstone A-Prime).